The sequence spans 106 residues: Small ribosomal subunit protein bS16 (106 aa).

Belongs to the bacterial ribosomal protein bS16 family.

This is Small ribosomal subunit protein bS16 from Wolbachia pipientis wMel.